The primary structure comprises 1411 residues: Early endosome antigen 1 (1411 aa).

Residues 1–27 (MFRRILQRTPGRVGSQGSDLDSSATPI) are disordered. The span at 15 to 27 (SQGSDLDSSATPI) shows a compositional bias: polar residues. Residues 41 to 64 (FICPQCMKSLGSADELFKHYQAVH) form a C2H2-type zinc finger. Phosphoserine is present on residues serine 52 and serine 70. A coiled-coil region spans residues 78 to 1348 (LALTRDDITL…IKHTQALNRK (1271 aa)). 2 disordered regions span residues 476–501 (STELQHQLEKSKQQHQEQQALQQSAT) and 1189–1217 (EKESQQLMREQVKKEEEKRKEEFSEKEAK). Positions 481-490 (HQLEKSKQQH) are enriched in basic and acidic residues. The segment covering 491–500 (QEQQALQQSA) has biased composition (low complexity). The segment at 1352–1410 (DNEVQNCMSCGKCFSVTVRRHHCRQCGNIFCAECSTKNALTPSSKKPVRVCDACFNDLQ) adopts an FYVE-type zinc-finger fold. The Zn(2+) site is built by cysteine 1358, cysteine 1361, cysteine 1374, cysteine 1377, cysteine 1382, cysteine 1385, cysteine 1402, and cysteine 1405.

In terms of assembly, homodimer. Binds STX6. Binds RAB5A, RAB5B, RAB5C and RAB22A that have been activated by GTP-binding. Interacts with ERBB2. Interacts with RAB31. Interacts with SAMD9 and SAMD9L. May interact with PLEKHF2.

It is found in the cytoplasm. Its subcellular location is the early endosome membrane. Its function is as follows. Binds phospholipid vesicles containing phosphatidylinositol 3-phosphate and participates in endosomal trafficking. The protein is Early endosome antigen 1 (Eea1) of Mus musculus (Mouse).